A 454-amino-acid polypeptide reads, in one-letter code: NADH-quinone oxidoreductase subunit H (454 aa).

Helical transmembrane passes span Trp18–Phe38, Val88–Ile108, Leu131–Leu151, Met172–Ser192, Trp206–Thr226, Phe256–Leu276, Trp296–Leu316, Leu328–Ala348, and Phe360–Val380. The segment at Ala395–Gly454 is disordered. Residues Pro409–Val421 show a composition bias toward pro residues.

It belongs to the complex I subunit 1 family. As to quaternary structure, NDH-1 is composed of 14 different subunits. Subunits NuoA, H, J, K, L, M, N constitute the membrane sector of the complex.

It is found in the cell membrane. The enzyme catalyses a quinone + NADH + 5 H(+)(in) = a quinol + NAD(+) + 4 H(+)(out). NDH-1 shuttles electrons from NADH, via FMN and iron-sulfur (Fe-S) centers, to quinones in the respiratory chain. The immediate electron acceptor for the enzyme in this species is believed to be ubiquinone. Couples the redox reaction to proton translocation (for every two electrons transferred, four hydrogen ions are translocated across the cytoplasmic membrane), and thus conserves the redox energy in a proton gradient. This subunit may bind ubiquinone. The polypeptide is NADH-quinone oxidoreductase subunit H (Streptomyces avermitilis (strain ATCC 31267 / DSM 46492 / JCM 5070 / NBRC 14893 / NCIMB 12804 / NRRL 8165 / MA-4680)).